The chain runs to 173 residues: Mediator of RNA polymerase II transcription subunit 19 (173 aa).

Positions 139–173 are disordered; the sequence is LMRGDDMSENDEFGARRSKRKKKAQNGTDSKRQHI.

Belongs to the Mediator complex subunit 19 family. In terms of assembly, component of the Mediator complex.

It localises to the nucleus. Functionally, component of the Mediator complex, a coactivator involved in the regulated transcription of nearly all RNA polymerase II-dependent genes. Mediator functions as a bridge to convey information from gene-specific regulatory proteins to the basal RNA polymerase II transcription machinery. Mediator is recruited to promoters by direct interactions with regulatory proteins and serves as a scaffold for the assembly of a functional preinitiation complex with RNA polymerase II and the general transcription factors. In Scheffersomyces stipitis (strain ATCC 58785 / CBS 6054 / NBRC 10063 / NRRL Y-11545) (Yeast), this protein is Mediator of RNA polymerase II transcription subunit 19 (ROX3).